We begin with the raw amino-acid sequence, 181 residues long: Oligoribonuclease (181 aa).

The Exonuclease domain occupies 8–171 (LIWIDMEMTG…ADIYDSIEEL (164 aa)). The active site involves tyrosine 129.

The protein belongs to the oligoribonuclease family.

The protein resides in the cytoplasm. 3'-to-5' exoribonuclease specific for small oligoribonucleotides. The protein is Oligoribonuclease of Nitrosomonas eutropha (strain DSM 101675 / C91 / Nm57).